The following is a 180-amino-acid chain: MDQNFKLLDQAIKRFENFPNQGTLFYDITPVFSNPQLFNFVLTQMAQFIKAINAEAIVCPEARGFIFGGALASKTQLPLVLVRKANKLPGQLISASYDLEYRKHAVLEMSTTSLIQANNAKRCVIVDDVLATAGTVAAIDQLLKQLNGETVGYCFLIELKKLNGKAKLQPNVVSKILLHY.

It belongs to the purine/pyrimidine phosphoribosyltransferase family. Homodimer.

The protein localises to the cytoplasm. It catalyses the reaction AMP + diphosphate = 5-phospho-alpha-D-ribose 1-diphosphate + adenine. It functions in the pathway purine metabolism; AMP biosynthesis via salvage pathway; AMP from adenine: step 1/1. Functionally, catalyzes a salvage reaction resulting in the formation of AMP, that is energically less costly than de novo synthesis. The protein is Adenine phosphoribosyltransferase of Mycoplasma genitalium (strain ATCC 33530 / DSM 19775 / NCTC 10195 / G37) (Mycoplasmoides genitalium).